We begin with the raw amino-acid sequence, 353 residues long: ATP-dependent kinase YFH7 (353 aa).

Residue 31 to 39 (GSPGSGKST) participates in ATP binding.

Belongs to the YFH7 family.

ATP-dependent kinase that could be involved in endoplasmic reticulum membrane assembly. This is ATP-dependent kinase YFH7 (YFH7) from Saccharomyces cerevisiae (strain Lalvin EC1118 / Prise de mousse) (Baker's yeast).